A 465-amino-acid chain; its full sequence is UPF0422 protein CBU_0937 (465 aa).

The N-terminal stretch at 1-23 (MTSKLVISALGLCVSGALSTTLA) is a signal peptide. Positions 28 to 60 (TTNQQITKRIDYLQAQINELRTQQKKERQKKKA) form a coiled coil.

This sequence belongs to the UPF0422 family.

This chain is UPF0422 protein CBU_0937, found in Coxiella burnetii (strain RSA 493 / Nine Mile phase I).